The chain runs to 319 residues: Ribosomal RNA small subunit methyltransferase H (319 aa).

S-adenosyl-L-methionine contacts are provided by residues 52 to 54 (GGH), D70, F100, D126, and Q133. Residues 289 to 319 (PKPLSPSELERQRNPRARSAKLRVAARSSQM) are disordered.

The protein belongs to the methyltransferase superfamily. RsmH family.

The protein resides in the cytoplasm. The catalysed reaction is cytidine(1402) in 16S rRNA + S-adenosyl-L-methionine = N(4)-methylcytidine(1402) in 16S rRNA + S-adenosyl-L-homocysteine + H(+). In terms of biological role, specifically methylates the N4 position of cytidine in position 1402 (C1402) of 16S rRNA. The sequence is that of Ribosomal RNA small subunit methyltransferase H from Synechococcus sp. (strain JA-2-3B'a(2-13)) (Cyanobacteria bacterium Yellowstone B-Prime).